The chain runs to 225 residues: Ribonuclease 3 (225 aa).

The RNase III domain maps to 7-129; that stretch reads IPRLCRTLGY…IIGAIYLDSD (123 aa). Mg(2+) is bound at residue glutamate 42. Residue aspartate 46 is part of the active site. Residues aspartate 115 and glutamate 118 each coordinate Mg(2+). Glutamate 118 is an active-site residue. Residues 155–225 form the DRBM domain; sequence DPKTLLQEYL…AAQVLELIKK (71 aa).

The protein belongs to the ribonuclease III family. Homodimer. Requires Mg(2+) as cofactor.

It localises to the cytoplasm. The enzyme catalyses Endonucleolytic cleavage to 5'-phosphomonoester.. In terms of biological role, digests double-stranded RNA. Involved in the processing of primary rRNA transcript to yield the immediate precursors to the large and small rRNAs (23S and 16S). Processes some mRNAs, and tRNAs when they are encoded in the rRNA operon. Processes pre-crRNA and tracrRNA of type II CRISPR loci if present in the organism. The sequence is that of Ribonuclease 3 from Shewanella pealeana (strain ATCC 700345 / ANG-SQ1).